Reading from the N-terminus, the 176-residue chain is RNA pyrophosphohydrolase (176 aa).

Residues 6-149 enclose the Nudix hydrolase domain; the sequence is GYRPNVGIVI…KRDVYRRVMK (144 aa). A Nudix box motif is present at residues 38–59; that stretch reads GGINPGESAEQAMYRELFEEVG.

Belongs to the Nudix hydrolase family. RppH subfamily. A divalent metal cation is required as a cofactor.

In terms of biological role, accelerates the degradation of transcripts by removing pyrophosphate from the 5'-end of triphosphorylated RNA, leading to a more labile monophosphorylated state that can stimulate subsequent ribonuclease cleavage. The sequence is that of RNA pyrophosphohydrolase from Shigella dysenteriae serotype 1 (strain Sd197).